A 181-amino-acid chain; its full sequence is Isopentenyl-diphosphate Delta-isomerase (181 aa).

2 residues coordinate Mn(2+): His-25 and His-32. The region spanning 30–164 (PLHLAFSCWL…PWAFSPWMVM (135 aa)) is the Nudix hydrolase domain. Cys-67 is a catalytic residue. Position 69 (His-69) interacts with Mn(2+). Residue Glu-87 participates in Mg(2+) binding. Positions 114 and 116 each coordinate Mn(2+). The active site involves Glu-116.

The protein belongs to the IPP isomerase type 1 family. Homodimer. Requires Mg(2+) as cofactor. The cofactor is Mn(2+).

It is found in the cytoplasm. It catalyses the reaction isopentenyl diphosphate = dimethylallyl diphosphate. It participates in isoprenoid biosynthesis; dimethylallyl diphosphate biosynthesis; dimethylallyl diphosphate from isopentenyl diphosphate: step 1/1. In terms of biological role, catalyzes the 1,3-allylic rearrangement of the homoallylic substrate isopentenyl (IPP) to its highly electrophilic allylic isomer, dimethylallyl diphosphate (DMAPP). The chain is Isopentenyl-diphosphate Delta-isomerase from Salmonella paratyphi B (strain ATCC BAA-1250 / SPB7).